Here is a 443-residue protein sequence, read N- to C-terminus: F-box only protein 39 (443 aa).

The region spanning 13 to 59 is the F-box domain; it reads QSCWATLPDVCLRRVFWWLGDRDRSRAALVCRKWNQIMYSADLWRYR.

In terms of assembly, directly interacts with SKP1 and CUL1.

Functionally, substrate-recognition component of the SCF (SKP1-CUL1-F-box protein)-type E3 ubiquitin ligase complex. This is F-box only protein 39 (Fbxo39) from Mus musculus (Mouse).